Reading from the N-terminus, the 227-residue chain is NADH-quinone oxidoreductase subunit C (227 aa).

This sequence belongs to the complex I 30 kDa subunit family. NDH-1 is composed of 14 different subunits. Subunits NuoB, C, D, E, F, and G constitute the peripheral sector of the complex.

It localises to the cell inner membrane. It catalyses the reaction a quinone + NADH + 5 H(+)(in) = a quinol + NAD(+) + 4 H(+)(out). In terms of biological role, NDH-1 shuttles electrons from NADH, via FMN and iron-sulfur (Fe-S) centers, to quinones in the respiratory chain. The immediate electron acceptor for the enzyme in this species is believed to be ubiquinone. Couples the redox reaction to proton translocation (for every two electrons transferred, four hydrogen ions are translocated across the cytoplasmic membrane), and thus conserves the redox energy in a proton gradient. The polypeptide is NADH-quinone oxidoreductase subunit C (Legionella pneumophila (strain Corby)).